The chain runs to 145 residues: D-aminoacyl-tRNA deacylase (145 aa).

The Gly-cisPro motif, important for rejection of L-amino acids motif lies at 137-138 (GP).

It belongs to the DTD family. As to quaternary structure, homodimer.

Its subcellular location is the cytoplasm. The catalysed reaction is glycyl-tRNA(Ala) + H2O = tRNA(Ala) + glycine + H(+). The enzyme catalyses a D-aminoacyl-tRNA + H2O = a tRNA + a D-alpha-amino acid + H(+). An aminoacyl-tRNA editing enzyme that deacylates mischarged D-aminoacyl-tRNAs. Also deacylates mischarged glycyl-tRNA(Ala), protecting cells against glycine mischarging by AlaRS. Acts via tRNA-based rather than protein-based catalysis; rejects L-amino acids rather than detecting D-amino acids in the active site. By recycling D-aminoacyl-tRNA to D-amino acids and free tRNA molecules, this enzyme counteracts the toxicity associated with the formation of D-aminoacyl-tRNA entities in vivo and helps enforce protein L-homochirality. The protein is D-aminoacyl-tRNA deacylase of Shewanella denitrificans (strain OS217 / ATCC BAA-1090 / DSM 15013).